The primary structure comprises 1082 residues: Transcription elongation factor SPT5 (1082 aa).

Residues M1–E28 show a composition bias toward acidic residues. The tract at residues M1–D88 is disordered. S32 and S36 each carry phosphoserine. Acidic residues-rich tracts occupy residues K38–D62 and D76–D88. A Glycyl lysine isopeptide (Lys-Gly) (interchain with G-Cter in SUMO2) cross-link involves residue K141. The interaction with SUPT4H1 and SUPT4H2 stretch occupies residues D174 to V268. The region spanning L271–K304 is the KOW 1 domain. An interaction with RNA polymerase II region spans residues Y311–F418. The short motif at K326–R332 is the UBR5-degron element. 2 KOW domains span residues F418–M449 and F470–F501. RNA is bound at residue K577. Residues I592–K625 enclose the KOW 4 domain. Residue R617 participates in DNA binding. The residue at position 661 (T661) is a Phosphothreonine. Phosphoserine occurs at positions 664 and 684. The disordered stretch occupies residues S669–R694. Residues Q678–R690 show a composition bias toward gly residues. Asymmetric dimethylarginine; alternate is present on residues R690 and R692. 2 positions are modified to omega-N-methylarginine; alternate: R690 and R692. Position 692 is a symmetric dimethylarginine; alternate (R692). Residues E698 to H731 enclose the KOW 5 domain. Residue K712 is modified to N6-acetyllysine. The span at R741–P801 shows a compositional bias: polar residues. The interval R741 to D972 is disordered. One copy of the CTR1-1; approximate repeat lies at D748 to G753. Residues D748–Q811 are 9 X 7 AA approximate tandem repeats of G-S-[QR]-T-P-X-[YQ], motif CTR1. The stretch at G754–Y759 is one CTR1-2 repeat. One copy of the CTR1-3 repeat lies at G760–Y765. Residues G766–Y772 form a CTR1-4 repeat. 2 positions are modified to phosphothreonine; by CDK9: T769 and T778. The CTR1-5 repeat unit spans residues G775–Y781. The CTR1-6 repeat unit spans residues G782–Q788. S783 is modified (phosphoserine). A phosphothreonine mark is found at T785 and T793. The CTR1-7 repeat unit spans residues G790–Y796. Residues G797 to H803 form a CTR1-8 repeat. Residue S798 is modified to Phosphoserine. T800 and T808 each carry phosphothreonine. Residues G805–Q811 form a CTR1-9 repeat. Over residues E828–P838 the composition is skewed to acidic residues. One copy of the CTR2-1 repeat lies at P838 to Y845. The tract at residues P838–Y944 is 10 X 8 AA approximate tandem repeats of P-[TS]-P-S-P-[QA]-[SG]-Y, motif CTR2. A CTR2-2; approximate repeat occupies T848–Y856. The segment covering P851–S860 has biased composition (pro residues). A CTR2-3; approximate repeat occupies P857 to Q863. The segment covering S861–F884 has biased composition (polar residues). A CTR2-4; half-length repeat occupies T875–Y879. Residues P890–Y896 form a CTR2-5; approximate repeat. Over residues P890–Y905 the composition is skewed to low complexity. The stretch at P898–Y905 is one CTR2-6 repeat. A CTR2-7; approximate repeat occupies P910–Y915. One copy of the CTR2-8 repeat lies at T918–Y924. Residues P926–Y933 form a CTR2-9 repeat. The stretch at P937–Y944 is one CTR2-10 repeat. A Phosphothreonine modification is found at T1028. Residue K1031 forms a Glycyl lysine isopeptide (Lys-Gly) (interchain with G-Cter in SUMO2) linkage.

This sequence belongs to the SPT5 family. In terms of assembly, interacts with SUPT4H1 to form DSIF. DSIF interacts with the positive transcription elongation factor b complex (P-TEFb complex), which is composed of CDK9 and cyclin-T (CCNT1 or CCNT2). DSIF interacts with RNA polymerase II, and this interaction is reduced by phosphorylation of the C-terminal domain (CTD) of POLR2A by P-TEFb. DSIF also interacts with the NELF complex, which is composed of NELFA, NELFB, NELFD and NELFE, and this interaction occurs following prior binding of DSIF to RNA polymerase II. Also interacts with PRMT1/HRMT1L2, HTATSF1/TATSF1, RNGTT/CAP1A, PRMT5/SKB1, SUPT6H, and can interact with PIN1. Component of a complex which is at least composed of HTATSF1/Tat-SF1, the P-TEFb complex components CDK9 and CCNT1, RNA polymerase II, SUPT5H, and NCL/nucleolin. Interacts with MCM3AP. Post-translationally, methylated by PRMT1/HRMT1L2 and PRMT5/SKB1. Methylation negatively regulates interaction with P-TEFb and RNA polymerase II. In terms of processing, phosphorylated by CDK7 and CDK9. Phosphorylation by P-TEFb (CDK9) at Thr residues of the C-terminal repeats alleviates transcriptional pausing and promotes transcription elongation. Dephosphorylated by the INTAC complex when transcripts are unfavorably configured for transcriptional elongation, leading to premature transcription termination: dephosphorylation is mediated by the PPP2CA component of the INTAC complex. Dephosphorylated by the PNUTS-PP1 complex in termination zones downstream of poly(A) sites, thereby promoting deceleration of RNA polymerase II transcription. Dephosphorylated by the PNUTS-PP1 complex in termination zones downstream of poly(A) sites, thereby promoting deceleration of RNA polymerase II transcription. Phosphorylation may also stimulate interaction with PIN1. Bulk phosphorylation occurs predominantly in mitosis. Ubiquitinated by UBR5 when not assembled in the DSIF complex, leading to its degradation: UBR5 recognizes and binds a degron that is not accessible when SUPT5H is part of the DSIF complex.

It localises to the nucleus. Its function is as follows. Component of the DRB sensitivity-inducing factor complex (DSIF complex), which regulates mRNA processing and transcription elongation by RNA polymerase II. DSIF positively regulates mRNA capping by stimulating the mRNA guanylyltransferase activity of RNGTT/CAP1A. DSIF also acts cooperatively with the negative elongation factor complex (NELF complex) to enhance transcriptional pausing at sites proximal to the promoter. Transcriptional pausing may facilitate the assembly of an elongation competent RNA polymerase II complex. DSIF and NELF promote pausing by inhibition of the transcription elongation factor TFIIS/S-II. TFIIS/S-II binds to RNA polymerase II at transcription pause sites and stimulates the weak intrinsic nuclease activity of the enzyme. Cleavage of blocked transcripts by RNA polymerase II promotes the resumption of transcription from the new 3' terminus and may allow repeated attempts at transcription through natural pause sites. Following phosphorylation by CDK9, DSIF can also positively regulate transcriptional elongation. This chain is Transcription elongation factor SPT5 (Supt5h), found in Mus musculus (Mouse).